The sequence spans 252 residues: Orotidine 5'-phosphate decarboxylase (252 aa).

Substrate contacts are provided by residues aspartate 26, lysine 48, 75–84, threonine 135, arginine 196, glutamine 205, glycine 225, and arginine 226; that span reads DLKFHDIPNT. Lysine 77 acts as the Proton donor in catalysis.

The protein belongs to the OMP decarboxylase family. Type 1 subfamily. Homodimer.

It carries out the reaction orotidine 5'-phosphate + H(+) = UMP + CO2. It functions in the pathway pyrimidine metabolism; UMP biosynthesis via de novo pathway; UMP from orotate: step 2/2. In terms of biological role, catalyzes the decarboxylation of orotidine 5'-monophosphate (OMP) to uridine 5'-monophosphate (UMP). The protein is Orotidine 5'-phosphate decarboxylase of Sodalis glossinidius (strain morsitans).